The primary structure comprises 192 residues: MAP6 domain-containing protein 1 (192 aa).

Residues cysteine 5, cysteine 10, and cysteine 11 are each lipidated (S-palmitoyl cysteine). The disordered stretch occupies residues 36–106 (LESEEPIPGG…RTKPSATPGR (71 aa)). Position 38 is a phosphoserine (serine 38). Residues 43–58 (PGGVPSRRGPSPAGSR) show a composition bias toward low complexity. 2 mn regions span residues 123-136 (TTSY…WTGV) and 158-170 (DGSP…APEV). Position 160 is a phosphoserine (serine 160).

This sequence belongs to the STOP family. In terms of assembly, interacts with calmodulin. Palmitoylated. Palmitoylation enhances association with microtubules.

Its subcellular location is the golgi apparatus. It localises to the cytoplasm. The protein resides in the cytoskeleton. Its function is as follows. May have microtubule-stabilizing activity. The sequence is that of MAP6 domain-containing protein 1 (MAP6D1) from Bos taurus (Bovine).